A 190-amino-acid polypeptide reads, in one-letter code: Peptidyl-tRNA hydrolase (190 aa).

Tyrosine 18 is a binding site for tRNA. Histidine 23 serves as the catalytic Proton acceptor. The tRNA site is built by phenylalanine 65, asparagine 67, and asparagine 113.

The protein belongs to the PTH family. Monomer.

It localises to the cytoplasm. The enzyme catalyses an N-acyl-L-alpha-aminoacyl-tRNA + H2O = an N-acyl-L-amino acid + a tRNA + H(+). In terms of biological role, hydrolyzes ribosome-free peptidyl-tRNAs (with 1 or more amino acids incorporated), which drop off the ribosome during protein synthesis, or as a result of ribosome stalling. Catalyzes the release of premature peptidyl moieties from peptidyl-tRNA molecules trapped in stalled 50S ribosomal subunits, and thus maintains levels of free tRNAs and 50S ribosomes. The chain is Peptidyl-tRNA hydrolase from Akkermansia muciniphila (strain ATCC BAA-835 / DSM 22959 / JCM 33894 / BCRC 81048 / CCUG 64013 / CIP 107961 / Muc).